The sequence spans 133 residues: MQSVSQVVKTSLPNYLSSLPVPDTFGGWFKLSFKDWLALIPPTAVVVGIGYVTYRAFYPKAHRTCKSGSGLCNENVRKHEAKVVDMIDIENIADKAAFCRCWKTKNWPYCDGSHAAHNKDTGDNVGPIVIKKK.

Over 1-35 the chain is Lumenal; it reads MQSVSQVVKTSLPNYLSSLPVPDTFGGWFKLSFKD. A helical membrane pass occupies residues 36–58; the sequence is WLALIPPTAVVVGIGYVTYRAFY. The Cytoplasmic portion of the chain corresponds to 59–133; the sequence is PKAHRTCKSG…NVGPIVIKKK (75 aa). [2Fe-2S] cluster-binding residues include Cys-99, Cys-101, Cys-110, and His-114.

This sequence belongs to the CISD protein family. CISD2 subfamily. [2Fe-2S] cluster serves as cofactor.

The protein resides in the endoplasmic reticulum membrane. The protein is CDGSH iron-sulfur domain-containing protein 2 homolog of Drosophila virilis (Fruit fly).